The chain runs to 392 residues: Queuine tRNA-ribosyltransferase (392 aa).

Asp93 acts as the Proton acceptor in catalysis. Residues 93 to 97 (DSGGY), Asp147, Gln189, and Gly216 each bind substrate. The segment at 247 to 253 (GVGAPED) is RNA binding. Asp266 (nucleophile) is an active-site residue. An RNA binding; important for wobble base 34 recognition region spans residues 271–275 (TRVAR). Zn(2+) contacts are provided by Cys304, Cys306, Cys309, and His335.

It belongs to the queuine tRNA-ribosyltransferase family. Homodimer. Within each dimer, one monomer is responsible for RNA recognition and catalysis, while the other monomer binds to the replacement base PreQ1. Requires Zn(2+) as cofactor.

The catalysed reaction is 7-aminomethyl-7-carbaguanine + guanosine(34) in tRNA = 7-aminomethyl-7-carbaguanosine(34) in tRNA + guanine. Its pathway is tRNA modification; tRNA-queuosine biosynthesis. In terms of biological role, catalyzes the base-exchange of a guanine (G) residue with the queuine precursor 7-aminomethyl-7-deazaguanine (PreQ1) at position 34 (anticodon wobble position) in tRNAs with GU(N) anticodons (tRNA-Asp, -Asn, -His and -Tyr). Catalysis occurs through a double-displacement mechanism. The nucleophile active site attacks the C1' of nucleotide 34 to detach the guanine base from the RNA, forming a covalent enzyme-RNA intermediate. The proton acceptor active site deprotonates the incoming PreQ1, allowing a nucleophilic attack on the C1' of the ribose to form the product. After dissociation, two additional enzymatic reactions on the tRNA convert PreQ1 to queuine (Q), resulting in the hypermodified nucleoside queuosine (7-(((4,5-cis-dihydroxy-2-cyclopenten-1-yl)amino)methyl)-7-deazaguanosine). The chain is Queuine tRNA-ribosyltransferase from Dehalococcoides mccartyi (strain ATCC BAA-2100 / JCM 16839 / KCTC 5957 / BAV1).